The following is a 197-amino-acid chain: Glycerol-3-phosphate acyltransferase (197 aa).

A run of 6 helical transmembrane segments spans residues 1-21 (MNIL…GFLI), 50-70 (WPAL…VKIA), 77-97 (GLIE…PIWL), 111-131 (MFLA…LIVL), 136-156 (FVSL…FFYL), and 157-177 (GNYM…VIWK).

It belongs to the PlsY family. As to quaternary structure, probably interacts with PlsX.

The protein resides in the cell inner membrane. It catalyses the reaction an acyl phosphate + sn-glycerol 3-phosphate = a 1-acyl-sn-glycero-3-phosphate + phosphate. It participates in lipid metabolism; phospholipid metabolism. Functionally, catalyzes the transfer of an acyl group from acyl-phosphate (acyl-PO(4)) to glycerol-3-phosphate (G3P) to form lysophosphatidic acid (LPA). This enzyme utilizes acyl-phosphate as fatty acyl donor, but not acyl-CoA or acyl-ACP. The chain is Glycerol-3-phosphate acyltransferase from Prochlorococcus marinus (strain MIT 9312).